Here is a 244-residue protein sequence, read N- to C-terminus: Sortase B (244 aa).

Residues Met1–Phe6 are Cytoplasmic-facing. Residues Leu7 to Lys24 form a helical membrane-spanning segment. Over Ile25–Ser244 the chain is Extracellular. The active-site Acyl-thioester intermediate is Cys223.

This sequence belongs to the bacterial sortase family. Class B subfamily.

It is found in the cell membrane. The enzyme catalyses The enzyme catalyzes a cell wall sorting reaction in which a surface protein with a sorting signal containing a NPXTN motif is cleaved between the Thr and Asn residue. The resulting threonine carboxyl end of the protein is covalently attached to a pentaglycine cross-bridge of peptidoglycan.. Its activity is regulated as follows. Inhibited by MTSET (2-(Trimethylammonium)-ethyl-methanethiosulfonate) and E64 ([n- (l-3-trans-carboxyoxirane-2-carbonyl)-l-leucyl]-amido(4-guanido)butane). Inhibited by coptisine. Transpeptidase that anchors surface proteins to the cell wall. Recognizes and modifies its substrate by proteolytic cleavage of a C-terminal sorting signal. Following cleavage, a covalent intermediate is formed via a thioester bond between the sortase and its substrate, which is then transferred and covalently attached to the cell wall. This sortase recognizes an Asn-Pro-Gln-Thr-Asn (NPQTN) motif in IsdC, which is cleaved by the sortase between the threonine and aspargine residues; may only have 1 substrate in this bacterium. May be dedicated to the process of iron acquisition during bacterial infection. The protein is Sortase B of Staphylococcus aureus (strain NCTC 8325 / PS 47).